The sequence spans 118 residues: Basic phospholipase A2 PA-9C (118 aa).

7 disulfide bridges follow: Cys11–Cys71, Cys27–Cys117, Cys29–Cys45, Cys44–Cys98, Cys51–Cys91, Cys60–Cys84, and Cys78–Cys89. 3 residues coordinate Ca(2+): Tyr28, Gly30, and Gly32. Residue His48 is part of the active site. Residue Asp49 coordinates Ca(2+). Residue Asp92 is part of the active site.

This sequence belongs to the phospholipase A2 family. Group I subfamily. D49 sub-subfamily. Ca(2+) is required as a cofactor. In terms of tissue distribution, expressed by the venom gland.

It is found in the secreted. It catalyses the reaction a 1,2-diacyl-sn-glycero-3-phosphocholine + H2O = a 1-acyl-sn-glycero-3-phosphocholine + a fatty acid + H(+). PLA2 catalyzes the calcium-dependent hydrolysis of the 2-acyl groups in 3-sn-phosphoglycerides. This is Basic phospholipase A2 PA-9C from Pseudechis australis (Mulga snake).